We begin with the raw amino-acid sequence, 848 residues long: Translation initiation factor IF-2 (848 aa).

The disordered stretch occupies residues 1-20 (MNESKGAVDSGLMSGKTERT). The 171-residue stretch at 346-516 (PRAPVVTVMG…LLMAELLELK (171 aa)) folds into the tr-type G domain. The segment at 355 to 362 (GHVDHGKT) is G1. A GTP-binding site is contributed by 355–362 (GHVDHGKT). The segment at 380-384 (GITQH) is G2. Residues 402-405 (DTPG) form a G3 region. GTP-binding positions include 402–406 (DTPGH) and 456–459 (NKID). The segment at 456-459 (NKID) is G4. Residues 492-494 (SAK) are G5.

It belongs to the TRAFAC class translation factor GTPase superfamily. Classic translation factor GTPase family. IF-2 subfamily.

It localises to the cytoplasm. Its function is as follows. One of the essential components for the initiation of protein synthesis. Protects formylmethionyl-tRNA from spontaneous hydrolysis and promotes its binding to the 30S ribosomal subunits. Also involved in the hydrolysis of GTP during the formation of the 70S ribosomal complex. The chain is Translation initiation factor IF-2 from Ehrlichia canis (strain Jake).